A 786-amino-acid chain; its full sequence is DNA double-strand break repair Rad50 ATPase (786 aa).

ATP contacts are provided by residues Lys13, 33–39 (NGSGKTT), and Gln138. 3 coiled-coil regions span residues 194 to 249 (LKAE…LKSI), 337 to 455 (EKAK…RALE), and 551 to 650 (ALER…VKAL). Residues 366–459 (EIAELQNKIN…KIRALEKYKG (94 aa)) enclose the Zinc-hook domain. Zn(2+) is bound by residues Cys411 and Cys414.

This sequence belongs to the SMC family. RAD50 subfamily. As to quaternary structure, homodimer. Forms a heterotetramer composed of two Mre11 subunits and two Rad50 subunits. Zn(2+) is required as a cofactor.

Part of the Rad50/Mre11 complex, which is involved in the early steps of DNA double-strand break (DSB) repair. The complex may facilitate opening of the processed DNA ends to aid in the recruitment of HerA and NurA. Rad50 controls the balance between DNA end bridging and DNA resection via ATP-dependent structural rearrangements of the Rad50/Mre11 complex. The polypeptide is DNA double-strand break repair Rad50 ATPase (Nanoarchaeum equitans (strain Kin4-M)).